The chain runs to 299 residues: ATP phosphoribosyltransferase (299 aa).

The protein belongs to the ATP phosphoribosyltransferase family. Long subfamily. Equilibrium between an active dimeric form, an inactive hexameric form and higher aggregates. Interconversion between the various forms is largely reversible and is influenced by the natural substrates and inhibitors of the enzyme. Mg(2+) is required as a cofactor.

Its subcellular location is the cytoplasm. It catalyses the reaction 1-(5-phospho-beta-D-ribosyl)-ATP + diphosphate = 5-phospho-alpha-D-ribose 1-diphosphate + ATP. It participates in amino-acid biosynthesis; L-histidine biosynthesis; L-histidine from 5-phospho-alpha-D-ribose 1-diphosphate: step 1/9. Its activity is regulated as follows. Feedback inhibited by histidine. In terms of biological role, catalyzes the condensation of ATP and 5-phosphoribose 1-diphosphate to form N'-(5'-phosphoribosyl)-ATP (PR-ATP). Has a crucial role in the pathway because the rate of histidine biosynthesis seems to be controlled primarily by regulation of HisG enzymatic activity. The polypeptide is ATP phosphoribosyltransferase (Enterobacter sp. (strain 638)).